Reading from the N-terminus, the 271-residue chain is 2-dehydro-3-deoxyphosphooctonate aldolase (271 aa).

The protein belongs to the KdsA family.

It localises to the cytoplasm. The enzyme catalyses D-arabinose 5-phosphate + phosphoenolpyruvate + H2O = 3-deoxy-alpha-D-manno-2-octulosonate-8-phosphate + phosphate. The protein operates within carbohydrate biosynthesis; 3-deoxy-D-manno-octulosonate biosynthesis; 3-deoxy-D-manno-octulosonate from D-ribulose 5-phosphate: step 2/3. It functions in the pathway bacterial outer membrane biogenesis; lipopolysaccharide biosynthesis. The protein is 2-dehydro-3-deoxyphosphooctonate aldolase of Campylobacter jejuni subsp. jejuni serotype O:6 (strain 81116 / NCTC 11828).